Consider the following 318-residue polypeptide: Ribose-phosphate pyrophosphokinase 1 (318 aa).

ATP-binding positions include 43–45 and 102–103; these read DGE and RQ. 2 residues coordinate Mg(2+): His136 and Asp176. The active site involves Lys199. Residues Arg201, Asp225, and 229-233 contribute to the D-ribose 5-phosphate site; that span reads DTAGT.

It belongs to the ribose-phosphate pyrophosphokinase family. Class I subfamily. As to quaternary structure, homohexamer. Mg(2+) is required as a cofactor.

It is found in the cytoplasm. It catalyses the reaction D-ribose 5-phosphate + ATP = 5-phospho-alpha-D-ribose 1-diphosphate + AMP + H(+). It functions in the pathway metabolic intermediate biosynthesis; 5-phospho-alpha-D-ribose 1-diphosphate biosynthesis; 5-phospho-alpha-D-ribose 1-diphosphate from D-ribose 5-phosphate (route I): step 1/1. Functionally, involved in the biosynthesis of the central metabolite phospho-alpha-D-ribosyl-1-pyrophosphate (PRPP) via the transfer of pyrophosphoryl group from ATP to 1-hydroxyl of ribose-5-phosphate (Rib-5-P). The protein is Ribose-phosphate pyrophosphokinase 1 of Listeria innocua serovar 6a (strain ATCC BAA-680 / CLIP 11262).